A 225-amino-acid polypeptide reads, in one-letter code: Tryptophan synthase beta chain (225 aa).

Belongs to the TrpB family. In terms of assembly, tetramer of two alpha and two beta chains. Pyridoxal 5'-phosphate is required as a cofactor.

The catalysed reaction is (1S,2R)-1-C-(indol-3-yl)glycerol 3-phosphate + L-serine = D-glyceraldehyde 3-phosphate + L-tryptophan + H2O. It functions in the pathway amino-acid biosynthesis; L-tryptophan biosynthesis; L-tryptophan from chorismate: step 5/5. Functionally, the beta subunit is responsible for the synthesis of L-tryptophan from indole and L-serine. The sequence is that of Tryptophan synthase beta chain (trpB) from Buchnera aphidicola subsp. Rhopalosiphum maidis.